Here is an 843-residue protein sequence, read N- to C-terminus: MVKFTADELRRIMDYKHNIRNMSVIAHVDHGKSTLTDSLVAAAGIIAQEVAGDVRMTDTRADEAERGITIKSTGISLYYEMTDESLKSFTGARDGNEYLINLIDSPGHVDFSSEVTAALRITDGALVVVDCIEGVCVQTETVLRQALGERIRPVLTVNKMDRCFLELQVDGEEAYQTFSRVIENANVIMATYEDPLLGDVQVYPEKGTVAFSAGLHGWAFTLTNFAKMYASKFGVVESKMMERLWGENFFDPATRKWSGKNTGSPTCKRGFVQFCYEPIKQIIATCMNDQKDKLWPMLAKLGVSMKNDEKELMGKPLMKRVMQTWLPASTALLEMMIFHLPSPHTAQRYRVENLYEGPLDDQYANAIRNCDPNGPLMLYVSKMIPASDKGRFFAFGRVFAGKVSTGMKVRIMGPNYIPGEKKDLYTKSVQRTVIWMGKRQETVEDVPCGNTVAMVGLDQFITKNATLTNEKEVDAHPIRAMKFSVSPVVRVAVQCKVASDLPKLVEGLKRLAKSDPMVVCTMEESGEHIVAGAGELHLEICLKDLQDDFMGGAEIIKSDPVVSFRETVCDRSTRTVMSKSPNKHNRLYMEARPMEEGLAEAIDDGRIGPRDDPKIRSKILAEEFGWDKDLAKKIWAFGPETTGPNMVVDMCKGVQYLNEIKDSVVAGFQWASKEGPLAEENMRGICFEVCDVVLHSDAIHRGGGQVIPTARRVIYASQITAKPRLLEPVYMVEIQAPEGALGGIYSVLNQKRGHVFEEMQRPGTPLYNIKAYLPVVESFGFSSQLRAATSGQAFPQCVFDHWEMMSSDPLEPGTQASVLVADIRKRKGLKEAMTPLSEFEDKL.

Positions 17–344 (HNIRNMSVIA…MMIFHLPSPH (328 aa)) constitute a tr-type G domain. Residues 26-33 (AHVDHGKS) and 158-161 (NKMD) contribute to the GTP site. H700 is subject to Diphthamide. The residue at position 837 (S837) is a Phosphoserine.

Belongs to the TRAFAC class translation factor GTPase superfamily. Classic translation factor GTPase family. In terms of assembly, may interact with glutaredoxins (Grxs). As to expression, expressed in root, stem, leaves, flowers and siliques.

Its subcellular location is the cytoplasm. It carries out the reaction GTP + H2O = GDP + phosphate + H(+). The protein operates within protein biosynthesis; polypeptide chain elongation. Catalyzes the GTP-dependent ribosomal translocation step during translation elongation. During this step, the ribosome changes from the pre-translocational (PRE) to the post-translocational (POST) state as the newly formed A-site-bound peptidyl-tRNA and P-site-bound deacylated tRNA move to the P and E sites, respectively. Catalyzes the coordinated movement of the two tRNA molecules, the mRNA and conformational changes in the ribosome. Involved in cold responses leading to freezing tolerance via the induction of cold-responsive genes. This chain is Elongation factor 2, found in Arabidopsis thaliana (Mouse-ear cress).